Reading from the N-terminus, the 382-residue chain is Chaperone protein DnaJ (382 aa).

A J domain is found at 5-69 (DLYGVLGVAK…QKRANYDQSG (65 aa)). Positions 104–123 (QFFGGGGGQRNPNAPRPGRD) are disordered. The CR-type zinc-finger motif lies at 138 to 220 (GKKTKIKYNR…CGGSGHEEER (83 aa)). Zn(2+)-binding residues include cysteine 151, cysteine 154, cysteine 168, cysteine 171, cysteine 194, cysteine 197, cysteine 208, and cysteine 211. 4 CXXCXGXG motif repeats span residues 151 to 158 (CHTCGGNG), 168 to 175 (CHQCGGSG), 194 to 201 (CPVCHGTG), and 208 to 215 (CPTCGGSG). Positions 358-382 (ASGESVTGSGKGNLFNKMRDKFNEN) are disordered.

This sequence belongs to the DnaJ family. As to quaternary structure, homodimer. Zn(2+) is required as a cofactor.

The protein resides in the cytoplasm. Its function is as follows. Participates actively in the response to hyperosmotic and heat shock by preventing the aggregation of stress-denatured proteins and by disaggregating proteins, also in an autonomous, DnaK-independent fashion. Unfolded proteins bind initially to DnaJ; upon interaction with the DnaJ-bound protein, DnaK hydrolyzes its bound ATP, resulting in the formation of a stable complex. GrpE releases ADP from DnaK; ATP binding to DnaK triggers the release of the substrate protein, thus completing the reaction cycle. Several rounds of ATP-dependent interactions between DnaJ, DnaK and GrpE are required for fully efficient folding. Also involved, together with DnaK and GrpE, in the DNA replication of plasmids through activation of initiation proteins. The sequence is that of Chaperone protein DnaJ from Levilactobacillus brevis (strain ATCC 367 / BCRC 12310 / CIP 105137 / JCM 1170 / LMG 11437 / NCIMB 947 / NCTC 947) (Lactobacillus brevis).